A 572-amino-acid chain; its full sequence is MEYWKHTNHGKDAGNELETSMATHGNKLTNKIIYILWTIILVLLSIVFIIVLINSIKSEKAHESLLRDINNEFMEITGKIQMASDNTNDLIQSGVNTRLLTIQSHVQNYIPISLTQQMSDLRKFISEITIRNDNQEVLPQRITHDVGIKPLNPDDFWRCTSGLPSLMKTPKIRLMPGPGLLAMPTTDDGCIRTPSLVINDLIYAYTSNLITRGCQDIGKSYQVLQIGIITVNSDLVPDLNPRISHTFNINDNRKSCSLALLNTDVYQLCSTPKVDERSDYASSGIEDIVLDIVNYDGSISTTRFKNNNISFDQPYAALYPSVGPGIYYKGKIIFLGYGGLEHPINENVICNTTGCPGKTQRDCNQASHSPWFSDRRMVNSIIVVDKGLNSTPKLKVWTISMRQNYWGSEGRLLLLGNKIYIYTRSTSWHSKLQLGIIDITDYSDIRIKWTWHNVLSRPGNNECPWGHSCPDGCITGVYTDAYPLNPTGSIVSSVILDSQKSRVNPVITYSTATERVNELAIRNRTLSAGYTTTSCITHYNKGYCFHIVEINHKSLNTFQPMLFKTEIPKSCS.

Topologically, residues 1-31 are intravirion; sequence MEYWKHTNHGKDAGNELETSMATHGNKLTNK. A helical membrane pass occupies residues 32–52; that stretch reads IIYILWTIILVLLSIVFIIVL. Over 53–572 the chain is Virion surface; the sequence is INSIKSEKAH…FKTEIPKSCS (520 aa). Intrachain disulfides connect Cys-190–Cys-214 and Cys-256–Cys-269. The segment at 252–257 is involved in neuraminidase activity; it reads NRKSCS. N-linked (GlcNAc...) asparagine; by host glycans are attached at residues Asn-308 and Asn-351. Cystine bridges form between Cys-355/Cys-469 and Cys-463/Cys-473. Residue Asn-523 is glycosylated (N-linked (GlcNAc...) asparagine; by host). A disulfide bond links Cys-535 and Cys-544.

This sequence belongs to the paramyxoviruses hemagglutinin-neuraminidase family. As to quaternary structure, homotetramer; composed of disulfide-linked homodimers. Interacts with F protein trimer.

The protein localises to the virion membrane. Its subcellular location is the host cell membrane. It catalyses the reaction Hydrolysis of alpha-(2-&gt;3)-, alpha-(2-&gt;6)-, alpha-(2-&gt;8)- glycosidic linkages of terminal sialic acid residues in oligosaccharides, glycoproteins, glycolipids, colominic acid and synthetic substrates.. In terms of biological role, attaches the virus to sialic acid-containing cell receptors and thereby initiating infection. Binding of HN protein to the receptor induces a conformational change that allows the F protein to trigger virion/cell membranes fusion. Its function is as follows. Neuraminidase activity ensures the efficient spread of the virus by dissociating the mature virions from the neuraminic acid containing glycoproteins. This is Hemagglutinin-neuraminidase (HN) from Homo sapiens (Human).